Consider the following 376-residue polypeptide: Succinyl-diaminopimelate desuccinylase (376 aa).

A Zn(2+)-binding site is contributed by His67. Residue Asp69 is part of the active site. Residue Asp100 participates in Zn(2+) binding. The Proton acceptor role is filled by Glu134. 3 residues coordinate Zn(2+): Glu135, Glu163, and His349.

Belongs to the peptidase M20A family. DapE subfamily. In terms of assembly, homodimer. Zn(2+) is required as a cofactor. Requires Co(2+) as cofactor.

It catalyses the reaction N-succinyl-(2S,6S)-2,6-diaminopimelate + H2O = (2S,6S)-2,6-diaminopimelate + succinate. It participates in amino-acid biosynthesis; L-lysine biosynthesis via DAP pathway; LL-2,6-diaminopimelate from (S)-tetrahydrodipicolinate (succinylase route): step 3/3. In terms of biological role, catalyzes the hydrolysis of N-succinyl-L,L-diaminopimelic acid (SDAP), forming succinate and LL-2,6-diaminopimelate (DAP), an intermediate involved in the bacterial biosynthesis of lysine and meso-diaminopimelic acid, an essential component of bacterial cell walls. The chain is Succinyl-diaminopimelate desuccinylase from Xanthomonas campestris pv. campestris (strain 8004).